We begin with the raw amino-acid sequence, 292 residues long: GID complex substrate-recognition subunit 10 (292 aa).

Belongs to the GID4/VID24 family. Substrate-recognition component of the GID/CTLH ubiquitin ligase complex. In the absence of stress, the complex exists as an inactive anticipatory complex (GID(Ant)), composed of VID30/GID1, the E3 ubiquitin-ligase RMD5/GID2, VID28/GID5, GID8, and the RING-like subunit FYV10/GID9, awaiting a substrate receptor to form the active E3 ligase complex. When cells are shifted to glucose-containing medium, the substrate receptor VID24/GID4 is induced and becomes part of the complex, named GID(SR4). Under osmotic or heat stress, the substrate receptor GID10 is induced and becomes part of the complex, named GID(SR10). Interacts with proteins that have an N-terminal Pro/N-degron, including ART2.

In terms of biological role, substrate-recognition component of the GID E3 ligase complex recruiting N termini and catalyzing ubiquitination of proteins targeted for degradation. GID E3 is regulated through assembly with interchangeable N-degron-binding substrate receptors induced by distinct environmental perturbations. Required for the adaptation to osmotic or heat stress. Required for the regulation of protein levels of the adapter protein ART2, a component of the ART-Rsp5 ubiquitin ligase pathway, part of the plasma membrane quality control. Specific for substrates with an N-terminal Pro (Pro/N-degron), including ART2. Has high affinity for the N-terminal sequence Pro-Tyr-Ile-Thr, and also recognizes nonproline residues such as Met-Tyr-Ile-Thr-Val or Val-Cys-Phe-His. This chain is GID complex substrate-recognition subunit 10, found in Saccharomyces cerevisiae (strain ATCC 204508 / S288c) (Baker's yeast).